The primary structure comprises 99 residues: Putative transmembrane protein ORF13 (99 aa).

3 helical membrane passes run 8-28 (IATF…MAGI), 42-62 (LGLF…YIIV), and 73-93 (GPIT…AIIA).

It is found in the host membrane. This His1 virus (isolate Australia/Victoria) (His1V) protein is Putative transmembrane protein ORF13.